The chain runs to 64 residues: Beta-defensin 1 (64 aa).

An N-terminal signal peptide occupies residues 1 to 20 (MRLHHLLLVLFFLVLSAGSG). A propeptide spanning residues 21–26 (FTQGIR) is cleaved from the precursor. Intrachain disulfides connect C31/C60, C38/C53, and C43/C61.

It belongs to the beta-defensin family. Monomer. Homodimer.

It localises to the secreted. It is found in the membrane. Functionally, has bactericidal activity. May act as a ligand for C-C chemokine receptor CCR6. Positively regulates the sperm motility and bactericidal activity in a CCR6-dependent manner. Binds to CCR6 and triggers Ca2+ mobilization in the sperm which is important for its motility. The sequence is that of Beta-defensin 1 (DEFB1) from Capra hircus (Goat).